The primary structure comprises 407 residues: GTPase Obg (407 aa).

Residues 1-159 (MKFVDEVSIR…RDLKLELKVL (159 aa)) form the Obg domain. The tract at residues 127 to 149 (NTRFKSSTNRAPRQTTPGKPGDQ) is disordered. The segment covering 129 to 143 (RFKSSTNRAPRQTTP) has biased composition (polar residues). The OBG-type G domain maps to 160 to 333 (ADVGLLGLPN…LTRDIMRYLE (174 aa)). Residues 166-173 (GLPNAGKS), 191-195 (FTTLV), 213-216 (DIPG), 283-286 (NKCD), and 314-316 (SAI) contribute to the GTP site. Mg(2+) contacts are provided by serine 173 and threonine 193. Residues 376–407 (SGVKSVHDIGDDDWDEEDVDDEDGPEIIYVRD) are disordered. Over residues 385–400 (GDDDWDEEDVDDEDGP) the composition is skewed to acidic residues.

The protein belongs to the TRAFAC class OBG-HflX-like GTPase superfamily. OBG GTPase family. As to quaternary structure, monomer. The cofactor is Mg(2+).

It is found in the cytoplasm. Its function is as follows. An essential GTPase which binds GTP, GDP and possibly (p)ppGpp with moderate affinity, with high nucleotide exchange rates and a fairly low GTP hydrolysis rate. Plays a role in control of the cell cycle, stress response, ribosome biogenesis and in those bacteria that undergo differentiation, in morphogenesis control. In Pseudomonas savastanoi pv. phaseolicola (strain 1448A / Race 6) (Pseudomonas syringae pv. phaseolicola (strain 1448A / Race 6)), this protein is GTPase Obg.